The sequence spans 280 residues: Ribosomal protein L11 methyltransferase (280 aa).

S-adenosyl-L-methionine contacts are provided by Thr130, Gly151, Asp172, and Asn213.

Belongs to the methyltransferase superfamily. PrmA family.

Its subcellular location is the cytoplasm. It catalyses the reaction L-lysyl-[protein] + 3 S-adenosyl-L-methionine = N(6),N(6),N(6)-trimethyl-L-lysyl-[protein] + 3 S-adenosyl-L-homocysteine + 3 H(+). Its function is as follows. Methylates ribosomal protein L11. The chain is Ribosomal protein L11 methyltransferase from Nitratiruptor sp. (strain SB155-2).